The chain runs to 125 residues: Desulfoferrodoxin homolog (125 aa).

C10, C13, C29, C30, H49, H69, H75, C116, and H119 together coordinate Fe cation.

It belongs to the desulfoferrodoxin family. Fe(3+) is required as a cofactor. The cofactor is Cu(2+).

In Archaeoglobus fulgidus (strain ATCC 49558 / DSM 4304 / JCM 9628 / NBRC 100126 / VC-16), this protein is Desulfoferrodoxin homolog.